The chain runs to 443 residues: Transcriptional adapter 2-alpha (443 aa).

Ser-6 bears the Phosphoserine mark. A ZZ-type zinc finger spans residues 12–69 (SDKPPCRGCSSYLTEPYIKCAECGPPPFFLCLQCFTRGFEYKKHQSDHTYEIMTSDFP). Zn(2+) contacts are provided by Cys-17, Cys-20, Cys-31, Cys-34, Cys-42, Cys-45, His-55, and His-59. The SANT domain maps to 70–122 (VLDPSWTAQEEMALLEAVMDCGFGNWQDVANQMCTKTKEECEKHYMKHFINNP). Glycyl lysine isopeptide (Lys-Gly) (interchain with G-Cter in SUMO2) cross-links involve residues Lys-132 and Lys-138. In terms of domain architecture, SWIRM spans 356-443 (NSGRRSAPPL…LIREGYITKA (88 aa)). The DNA-binding element occupies 426 to 435 (KTRKIYDFLI).

Interacts with GCN5. Interacts with NR3C1. Associated with the P/CAF protein in the PCAF complex. Component of the PCAF complex, at least composed of TADA2L/ADA2, TADA3L/ADA3, TAF5L/PAF65-beta, TAF6L/PAF65-alpha, TAF10/TAFII30, TAF12/TAFII20, TAF9/TAFII31 and TRRAP. Component of the ADA2A-containing complex (ATAC), composed of KAT14, KAT2A, TADA2L, TADA3L, ZZ3, MBIP, WDR5, YEATS2, CCDC101 and DR1. Interacts with CCDC134.

Its subcellular location is the nucleus. It localises to the chromosome. Functionally, component of the ATAC complex, a complex with histone acetyltransferase activity on histones H3 and H4. Required for the function of some acidic activation domains, which activate transcription from a distant site. Binds double-stranded DNA. Binds dinucleosomes, probably at the linker region between neighboring nucleosomes. Plays a role in chromatin remodeling. May promote TP53/p53 'Lys-321' acetylation, leading to reduced TP53 stability and transcriptional activity. May also promote XRCC6 acetylation thus facilitating cell apoptosis in response to DNA damage. The sequence is that of Transcriptional adapter 2-alpha (Tada2a) from Mus musculus (Mouse).